We begin with the raw amino-acid sequence, 347 residues long: METPFYGDEALSGLGGGGSSSGGGGSFASPGRLFPGAPPTAAPGSMMKKDALTLSLSEQVAAALKPAAAPPPGPLRTDGAPGTAPPDGLLASPELGLLKLASPELERLIIQSNGLVTTTPTSTQFLYPKVAASEEQEFAEGFVKALEDLHKQNQLSAGAASAAAAAGGPSGTAAGAAPPSELAPAAATPEAPVYANLSSYAGGTGSAGGAATVAFAAEPVPFPPPPPPGTLGPPRLAALKDEPQTVPDVPSFGESPPLSPIDMDTQERIKAERKRLRNRIAASKCRKRKLERISRLEEKVKTLKSQNTELASTASLLREQVAQLKQKVLSHVNSGCQLLPQHQVPAY.

The disordered stretch occupies residues 1–46; sequence METPFYGDEALSGLGGGGSSSGGGGSFASPGRLFPGAPPTAAPGSM. Positions 13–26 are enriched in gly residues; the sequence is GLGGGGSSSGGGGS. The Menin-binding motif (MBM) motif lies at 29–41; sequence SPGRLFPGAPPTA. An MAP kinase docking motif; essential for its phosphorylation motif is present at residues 48–57; that stretch reads KKDALTLSLS. Residues 63–91 form a disordered region; it reads ALKPAAAPPPGPLRTDGAPGTAPPDGLLA. Ser-92 carries the phosphoserine modification. Ser-102 carries the phosphoserine; by MAPK8 modification. Thr-119 is subject to Phosphothreonine. Disordered regions lie at residues 164 to 183 and 218 to 264; these read AAAG…SELA and EPVP…IDMD. Residues 220-231 show a composition bias toward pro residues; that stretch reads VPFPPPPPPGTL. A phosphoserine mark is found at Ser-251, Ser-255, and Ser-259. The segment at 268–295 is basic motif; it reads RIKAERKRLRNRIAASKCRKRKLERISR. A bZIP domain is found at 268–331; sequence RIKAERKRLR…AQLKQKVLSH (64 aa). The interval 296-324 is leucine-zipper; sequence LEEKVKTLKSQNTELASTASLLREQVAQL.

It belongs to the bZIP family. Jun subfamily. In terms of assembly, heterodimer; binds DNA as a heterodimer. Component of an AP-1 transcription factor complex composed of JUN-FOS heterodimers. As part of the AP-1 transcription factor complex, forms heterodimers with FOS proteins, thereby binding to the AP-1 consensus sequence and stimulating transcription. Forms heterodimers with FOSB; thereby binding to the AP-1 consensus sequence. Interacts (via MBM motif) with MEN1; this interaction represses transcriptional activation. Interacts with MAPK10; this interaction is inhibited in the presence of MEN1. Phosphorylated by MAP kinases MAPK8 and MAPK10; phosphorylation is inhibited in the presence of MEN1.

It is found in the nucleus. Transcription factor binding AP-1 sites. Heterodimerizes with proteins of the FOS family to form an AP-1 transcription factor complex, thereby enhancing their DNA binding activity to an AP-1 consensus sequence 3'-TGA[GC]TCA-5' and enhancing their transcriptional activity. The polypeptide is Transcription factor JunD (JUND) (Bos taurus (Bovine)).